We begin with the raw amino-acid sequence, 191 residues long: UPF0312 protein Sputw3181_1309 (191 aa).

A signal peptide spans 1–22 (MKKQLLSALIGVSLLVPMAASA).

The protein belongs to the UPF0312 family. Type 1 subfamily.

It localises to the periplasm. This is UPF0312 protein Sputw3181_1309 from Shewanella sp. (strain W3-18-1).